A 417-amino-acid chain; its full sequence is Serine hydroxymethyltransferase (417 aa).

(6S)-5,6,7,8-tetrahydrofolate-binding positions include leucine 121 and 125–127 (GHL). An N6-(pyridoxal phosphate)lysine modification is found at lysine 229. 355-357 (SPF) is a (6S)-5,6,7,8-tetrahydrofolate binding site.

This sequence belongs to the SHMT family. Homodimer. The cofactor is pyridoxal 5'-phosphate.

Its subcellular location is the cytoplasm. The enzyme catalyses (6R)-5,10-methylene-5,6,7,8-tetrahydrofolate + glycine + H2O = (6S)-5,6,7,8-tetrahydrofolate + L-serine. The protein operates within one-carbon metabolism; tetrahydrofolate interconversion. Its pathway is amino-acid biosynthesis; glycine biosynthesis; glycine from L-serine: step 1/1. Functionally, catalyzes the reversible interconversion of serine and glycine with tetrahydrofolate (THF) serving as the one-carbon carrier. This reaction serves as the major source of one-carbon groups required for the biosynthesis of purines, thymidylate, methionine, and other important biomolecules. Also exhibits THF-independent aldolase activity toward beta-hydroxyamino acids, producing glycine and aldehydes, via a retro-aldol mechanism. This is Serine hydroxymethyltransferase from Salmonella choleraesuis (strain SC-B67).